A 502-amino-acid polypeptide reads, in one-letter code: Probable mitochondrial-processing peptidase subunit alpha (502 aa).

This sequence belongs to the peptidase M16 family. In terms of assembly, heterodimer of mas2 (alpha) and mas1 (beta) subunits, forming the mitochondrial processing protease (MPP) in which mas2 is involved in substrate recognition and binding and mas1 is the catalytic subunit.

It is found in the mitochondrion matrix. Its function is as follows. Substrate recognition and binding subunit of the essential mitochondrial processing protease (MPP), which cleaves the mitochondrial sequence off newly imported precursors proteins. The sequence is that of Probable mitochondrial-processing peptidase subunit alpha (mas2) from Schizosaccharomyces pombe (strain 972 / ATCC 24843) (Fission yeast).